A 358-amino-acid polypeptide reads, in one-letter code: DnaJ homolog subfamily B member 11 (358 aa).

An N-terminal signal peptide occupies residues 1 to 22 (MAPQNLSTFCLLLLYLIGAVIA). Positions 25 to 90 (DFYKILGVPR…EKRKQYDTYG (66 aa)) constitute a J domain. A Phosphothreonine modification is found at T188. A glycan (N-linked (GlcNAc...) asparagine) is linked at N261.

In terms of assembly, part of a large chaperone multiprotein complex comprising DNAJB11, HSP90B1, HSPA5, HYOU, PDIA2, PDIA4, PDIA6, PPIB, SDF2L1, UGGT1 and very small amounts of ERP29, but not, or at very low levels, CALR nor CANX. Binds to denatured substrates in an ATP-independent manner. Interacts via the J domain with HSPA5 in an ATP-dependent manner. In terms of processing, contains high-mannose Endo H-sensitive carbohydrates. Cys-169, Cys-171, Cys-193 and Cys-196 form intramolecular disulfide bonds. The preferential partner for each Cys is not known. Post-translationally, thr-188 was reported to be phosphorylated upon DNA damage by ATM or ATR; however as this position has been shown to be in the ER lumen, the in vivo relevance is not proven. In terms of tissue distribution, widely expressed.

It is found in the endoplasmic reticulum lumen. Its function is as follows. As a co-chaperone for HSPA5 it is required for proper folding, trafficking or degradation of proteins. Binds directly to both unfolded proteins that are substrates for ERAD and nascent unfolded peptide chains, but dissociates from the HSPA5-unfolded protein complex before folding is completed. May help recruiting HSPA5 and other chaperones to the substrate. Stimulates HSPA5 ATPase activity. It is necessary for maturation and correct trafficking of PKD1. This chain is DnaJ homolog subfamily B member 11 (DNAJB11), found in Homo sapiens (Human).